The primary structure comprises 153 residues: Mitochondrial zinc maintenance protein 1, mitochondrial (153 aa).

It belongs to the complex I LYR family. MZM1 subfamily. In terms of assembly, interacts with RIP1.

The protein resides in the mitochondrion matrix. In terms of biological role, assembly factor required for Rieske Fe-S protein RIP1 incorporation into the cytochrome b-c1 (CIII) complex. Functions as a chaperone, binding to this subunit within the mitochondrial matrix and stabilizing it prior to its translocation and insertion into the late CIII dimeric intermediate within the mitochondrial inner membrane. Modulates the mitochondrial matrix zinc pool. The protein is Mitochondrial zinc maintenance protein 1, mitochondrial (MZM1) of Ajellomyces capsulatus (strain G186AR / H82 / ATCC MYA-2454 / RMSCC 2432) (Darling's disease fungus).